The following is a 115-amino-acid chain: Large ribosomal subunit protein P2 (115 aa).

N-acetylmethionine is present on Met-1. A phosphoserine mark is found at Ser-17 and Ser-19. Lys-21 is modified (N6-acetyllysine; alternate). An N6-succinyllysine; alternate modification is found at Lys-21. Residues Ala-76 to Ala-90 are compositionally biased toward low complexity. The segment at Ala-76–Asp-115 is disordered. Phosphoserine occurs at positions 79 and 86. Positions Ala-91–Glu-101 are enriched in basic and acidic residues. 2 positions are modified to phosphoserine: Ser-102 and Ser-105.

This sequence belongs to the eukaryotic ribosomal protein P1/P2 family. In terms of assembly, heterodimer with RPLP1 at the lateral ribosomal stalk of the large ribosomal subunit.

In terms of biological role, plays an important role in the elongation step of protein synthesis. The chain is Large ribosomal subunit protein P2 (Rplp2) from Mus musculus (Mouse).